A 27-amino-acid polypeptide reads, in one-letter code: CYIQNCPRGGKRSYPDTAVPQCIPCGP.

Cysteine 1 and cysteine 6 form a disulfide bridge. Glycine 9 carries the post-translational modification Glycine amide.

The protein belongs to the vasopressin/oxytocin family.

Vasotocin is an antidiuretic hormone. This chain is Vasotocin-neurophysin VT, found in Sclerophrys regularis (Common African toad).